A 38-amino-acid polypeptide reads, in one-letter code: MSKSNPNKQSVELNRTSLYWGLLLIFVLAVLFSSYIFN.

The chain crosses the membrane as a helical span at residues Ser17–Phe37.

This sequence belongs to the PsbL family. As to quaternary structure, PSII is composed of 1 copy each of membrane proteins PsbA, PsbB, PsbC, PsbD, PsbE, PsbF, PsbH, PsbI, PsbJ, PsbK, PsbL, PsbM, PsbT, PsbY, PsbZ, Psb30/Ycf12, at least 3 peripheral proteins of the oxygen-evolving complex and a large number of cofactors. It forms dimeric complexes.

It is found in the plastid. It localises to the chloroplast thylakoid membrane. In terms of biological role, one of the components of the core complex of photosystem II (PSII). PSII is a light-driven water:plastoquinone oxidoreductase that uses light energy to abstract electrons from H(2)O, generating O(2) and a proton gradient subsequently used for ATP formation. It consists of a core antenna complex that captures photons, and an electron transfer chain that converts photonic excitation into a charge separation. This subunit is found at the monomer-monomer interface and is required for correct PSII assembly and/or dimerization. The chain is Photosystem II reaction center protein L from Bigelowiella natans (Pedinomonas minutissima).